The following is a 989-amino-acid chain: Serine-repeat antigen protein 5 (989 aa).

The N-terminal stretch at 1–16 (MKSYISLFFILCVIFN) is a signal peptide. Disordered stretches follow at residues 26-91 (SQTG…EKQD) and 165-245 (LPSN…RNLQ). Composition is skewed to low complexity over residues 52 to 87 (QGST…STSS), 167 to 180 (SNGT…STGT), and 191 to 225 (SSSS…SSSS). Position 167 is a phosphoserine (serine 167). Residue asparagine 168 is glycosylated (N-linked (GlcNAc...) asparagine). Residues 208–245 (SSSSSSSSSSSSSSSSSSESLPANGPDSPTVKPPRNLQ) form an interaction with PTKL region. An N-linked (GlcNAc...) asparagine glycan is attached at asparagine 310. The interaction with host VTN stretch occupies residues 365-382 (YKYLSEDIVSNFKEIKAE). Cysteine 437 and cysteine 489 are joined by a disulfide. A Phosphothreonine modification is found at threonine 541. 5 disulfide bridges follow: cysteine 559–cysteine 564, cysteine 573–cysteine 602, cysteine 585–cysteine 628, cysteine 619–cysteine 664, and cysteine 747–cysteine 801. Residues 571-989 (NNCISNLQVE…TNNECYFCYV (419 aa)) are thiol-protease-like. Catalysis depends on residues histidine 754 and asparagine 779. An N-linked (GlcNAc...) asparagine glycan is attached at asparagine 820. The propeptide at 835–878 (KASPEFYHNLYFKNFNVGKKNLFSEKEDNENNKKLGNNYIIFGQ) is inhibition peptide. Serine 858 carries the phosphoserine modification.

Belongs to the peptidase C1 family. As to quaternary structure, may interact (via C-terminus) with PTKL (via SAM domain). Interacts (via C-terminus) with human VTN (via hemopexin repeat 2); may form heterotetramers of two VTN and SERA5 P47 heterodimers; the interaction may protect merozoites from phagocytosis by host monocytes; VTN glycosylation appears to be dispensable for the interaction. In terms of assembly, monomer. Interacts with kinase CPK1/CDPK1 at the schizont stage. Phosphorylation by CPK1/CDPK1 increases SERA5 protease activity towards a synthetic peptide in vitro. Post-translationally, just prior to merozoite egress from host erythrocytes, proteolytically cleaved into multiple fragments. Cleaved by SUB1 into p47 and p73, p73 is further cleaved by SUB1 into p56 and p18 and p56 is further processed into p50 by an unidentified protease. p47 remains covalently associated with p18 via disulfide bond. p47 can be processed into p25n and p25c by SUB1. p25c and p25n remain associated with p18. Proteolytic processing is essential for merozoite egress from host erythrocytes. The cleavage of the propeptide to produce p50 is necessary for protease activity and to promote merozoite egress.

It localises to the parasitophorous vacuole. The protein resides in the secreted. The protein localises to the cell membrane. In terms of biological role, plays an essential role during the asexual blood stage development by controlling the kinetics of merozoite egress from host erythrocytes. Specifically, prevents premature rupture of the parasitophorous vacuole and host erythrocyte membranes. May prevent merozoite phagocytosis by host monocytes via interaction with host VTN at the merozoite surface. Plays a role in parasite growth. Its function is as follows. Protease activity is controversial. The protein is Serine-repeat antigen protein 5 of Plasmodium falciparum (isolate CDC / Honduras).